The primary structure comprises 525 residues: Glutamate--cysteine ligase (525 aa).

The protein belongs to the glutamate--cysteine ligase type 1 family. Type 1 subfamily.

The catalysed reaction is L-cysteine + L-glutamate + ATP = gamma-L-glutamyl-L-cysteine + ADP + phosphate + H(+). It functions in the pathway sulfur metabolism; glutathione biosynthesis; glutathione from L-cysteine and L-glutamate: step 1/2. The polypeptide is Glutamate--cysteine ligase (Vibrio vulnificus (strain CMCP6)).